A 173-amino-acid polypeptide reads, in one-letter code: Membrane-bound hydrogenase subunit beta (173 aa).

Belongs to the complex I 30 kDa subunit family. In terms of assembly, the membrane-bound hydrogenase complex is composed of MbhK and MbhL, and may also contain MbhJ. It depends on Ni(2+) as a cofactor.

Its subcellular location is the cell membrane. The enzyme catalyses H2 + 2 oxidized [2Fe-2S]-[ferredoxin] = 2 reduced [2Fe-2S]-[ferredoxin] + 2 H(+). With respect to regulation, inhibited by 0.1 mM Cu(2+). Its function is as follows. Beta subunit of a hydrogen-evolving hydrogenase that utilizes protons both as a substrate for hydrogen production and proton translocation. Acts by coupling the redox reaction via ferredoxin and iron-sulfur (Fe-S) clusters to proton translocation across the membrane thereby conserving the redox energy in a proton gradient. The protein is Membrane-bound hydrogenase subunit beta of Pyrococcus furiosus (strain ATCC 43587 / DSM 3638 / JCM 8422 / Vc1).